The sequence spans 236 residues: 2-C-methyl-D-erythritol 4-phosphate cytidylyltransferase (236 aa).

The protein belongs to the IspD/TarI cytidylyltransferase family. IspD subfamily. In terms of assembly, homodimer.

The catalysed reaction is 2-C-methyl-D-erythritol 4-phosphate + CTP + H(+) = 4-CDP-2-C-methyl-D-erythritol + diphosphate. Its pathway is isoprenoid biosynthesis; isopentenyl diphosphate biosynthesis via DXP pathway; isopentenyl diphosphate from 1-deoxy-D-xylulose 5-phosphate: step 2/6. In terms of biological role, catalyzes the formation of 4-diphosphocytidyl-2-C-methyl-D-erythritol from CTP and 2-C-methyl-D-erythritol 4-phosphate (MEP). The chain is 2-C-methyl-D-erythritol 4-phosphate cytidylyltransferase from Escherichia coli O157:H7.